Here is a 424-residue protein sequence, read N- to C-terminus: Tyrosine--tRNA ligase (424 aa).

Y37 is a binding site for L-tyrosine. The 'HIGH' region motif lies at 42-51 (PTADSLHLGH). Positions 174 and 178 each coordinate L-tyrosine. Positions 234–238 (KFGKT) match the 'KMSKS' region motif. An ATP-binding site is contributed by K237. One can recognise an S4 RNA-binding domain in the interval 357-414 (TGLIDALVASGLAKSKSEARTFIQSGSVAINGNKAEALDHAIGGDELLYGRFTILRRG).

It belongs to the class-I aminoacyl-tRNA synthetase family. TyrS type 1 subfamily. In terms of assembly, homodimer.

It localises to the cytoplasm. The enzyme catalyses tRNA(Tyr) + L-tyrosine + ATP = L-tyrosyl-tRNA(Tyr) + AMP + diphosphate + H(+). Catalyzes the attachment of tyrosine to tRNA(Tyr) in a two-step reaction: tyrosine is first activated by ATP to form Tyr-AMP and then transferred to the acceptor end of tRNA(Tyr). The chain is Tyrosine--tRNA ligase from Dechloromonas aromatica (strain RCB).